We begin with the raw amino-acid sequence, 83 residues long: UPF0298 protein SERP0712 (83 aa).

The protein belongs to the UPF0298 family.

It is found in the cytoplasm. The sequence is that of UPF0298 protein SERP0712 from Staphylococcus epidermidis (strain ATCC 35984 / DSM 28319 / BCRC 17069 / CCUG 31568 / BM 3577 / RP62A).